Reading from the N-terminus, the 190-residue chain is T-cell receptor gamma chain C region 5/10-13 (190 aa).

Residues 1–157 are c region; the sequence is DKRTDSDFSP…LQVTTTYAFY (157 aa). A helical membrane pass occupies residues 158 to 178; sequence TYLILFFKSMVHLAFVVFCLF. The Cytoplasmic portion of the chain corresponds to 179 to 190; sequence RRAAMSCDDQRS.

Its subcellular location is the membrane. This is T-cell receptor gamma chain C region 5/10-13 from Mus musculus (Mouse).